The primary structure comprises 643 residues: Pescadillo homolog (643 aa).

A BRCT domain is found at 319–412; the sequence is KLKTLFKGLK…RLLPTNKYFM (94 aa). Disordered regions lie at residues 437–475, 492–571, and 609–643; these read AARKAAEGEEEEETFEPAEVNADHEHISDDEEVQDPENE, TDSL…YREN, and DKNARLLANKRERIEKQKRAEQMEKQKQQRKQILA. A compositionally biased stretch (acidic residues) spans 464 to 475; sequence SDDEEVQDPENE. Positions 492-518 are enriched in basic and acidic residues; it reads TDSLNSGKKEGADDATDNGKDAAEKKQ. Residues 524-544 show a composition bias toward acidic residues; it reads GESDDEDEEEEDDDDGEEEED. Residues 569–643 are a coiled coil; the sequence is RENEAEKKIV…QKQQRKQILA (75 aa). A compositionally biased stretch (basic and acidic residues) spans 609–635; that stretch reads DKNARLLANKRERIEKQKRAEQMEKQK.

Belongs to the pescadillo family.

The protein resides in the nucleus. It localises to the nucleolus. It is found in the nucleoplasm. In terms of biological role, required for maturation of ribosomal RNAs and formation of the large ribosomal subunit. The polypeptide is Pescadillo homolog (Anopheles gambiae (African malaria mosquito)).